Consider the following 101-residue polypeptide: Gibberellin-regulated protein 6 (101 aa).

The first 23 residues, 1 to 23 (MAKLITSFLLLTILFTFVCLTMS), serve as a signal peptide directing secretion.

The protein belongs to the GASA family. Six disulfide bonds may be present.

Its subcellular location is the secreted. In terms of biological role, gibberellin-regulated protein that may function in hormonal controlled steps of development such as seed germination, flowering and seed maturation. This chain is Gibberellin-regulated protein 6 (GASA6), found in Arabidopsis thaliana (Mouse-ear cress).